Reading from the N-terminus, the 986-residue chain is Bifunctional glutamine synthetase adenylyltransferase/adenylyl-removing enzyme (986 aa).

Positions 1 to 471 are adenylyl removase; it reads MAEAIERSLS…RYAQLFEQEA (471 aa). The interval 475–986 is adenylyl transferase; the sequence is TETGNLVFTG…RIFQGVVAAA (512 aa).

It belongs to the GlnE family. It depends on Mg(2+) as a cofactor.

It carries out the reaction [glutamine synthetase]-O(4)-(5'-adenylyl)-L-tyrosine + phosphate = [glutamine synthetase]-L-tyrosine + ADP. The enzyme catalyses [glutamine synthetase]-L-tyrosine + ATP = [glutamine synthetase]-O(4)-(5'-adenylyl)-L-tyrosine + diphosphate. Its function is as follows. Involved in the regulation of glutamine synthetase GlnA, a key enzyme in the process to assimilate ammonia. When cellular nitrogen levels are high, the C-terminal adenylyl transferase (AT) inactivates GlnA by covalent transfer of an adenylyl group from ATP to specific tyrosine residue of GlnA, thus reducing its activity. Conversely, when nitrogen levels are low, the N-terminal adenylyl removase (AR) activates GlnA by removing the adenylyl group by phosphorolysis, increasing its activity. The regulatory region of GlnE binds the signal transduction protein PII (GlnB) which indicates the nitrogen status of the cell. The chain is Bifunctional glutamine synthetase adenylyltransferase/adenylyl-removing enzyme from Rhizobium meliloti (strain 1021) (Ensifer meliloti).